Here is a 127-residue protein sequence, read N- to C-terminus: Calcitonin receptor-stimulating peptide 1 (127 aa).

The first 25 residues, 1–25 (MGFWKFSPFLVLGILALYQVGFLQA), serve as a signal peptide directing secretion. A propeptide spanning residues 26–79 (APFRSALENPPDSGVRNEEELRLLLAAVMKDYMQMKTHELEQEQETEGSRVAVQ) is cleaved from the precursor. Cysteine 83 and cysteine 88 are disulfide-bonded.

Belongs to the calcitonin family.

The protein resides in the secreted. Functionally, stimulates cAMP production in porcine kidney cell line LLC-PK1 via the calcitonin receptor (CT) but not via the CT-like (CL) receptor. The protein is Calcitonin receptor-stimulating peptide 1 (CRSP1) of Canis lupus familiaris (Dog).